The primary structure comprises 256 residues: Kallikrein 1-related peptidase-like b4 (256 aa).

A signal peptide spans 1–17 (MWFLILFLALSLGGIDA). Positions 18-24 (APPVQSQ) are activation peptide homolog. The region spanning 18–253 (APPVQSQVDC…FSSWIRETMA (236 aa)) is the Peptidase S1 domain. A disulfide bond links cysteine 45 and cysteine 61. The Zn(2+) site is built by glutamate 77 and histidine 84. Disulfide bonds link cysteine 147–cysteine 214, cysteine 179–cysteine 193, and cysteine 204–cysteine 229.

It belongs to the peptidase S1 family. Kallikrein subfamily. As to quaternary structure, 7S nerve growth factor is composed of two alpha chains, a beta dimer composed of identical chains, and two gamma chains. The cofactor is Zn(2+). The presence of Gln-24 prevents cleavage of the activation peptide, which remains attached at the amino end of the mature alpha chain.

In Mus musculus (Mouse), this protein is Kallikrein 1-related peptidase-like b4 (Klk1b4).